We begin with the raw amino-acid sequence, 895 residues long: Probable inorganic carbon transporter subunit DabA 1 (895 aa).

Zn(2+) is bound by residues cysteine 398, aspartate 400, histidine 581, and cysteine 596.

This sequence belongs to the inorganic carbon transporter (TC 9.A.2) DabA family. As to quaternary structure, forms a complex with DabB. The cofactor is Zn(2+).

It is found in the cell inner membrane. In terms of biological role, part of an energy-coupled inorganic carbon pump. The protein is Probable inorganic carbon transporter subunit DabA 1 of Rhodopirellula baltica (strain DSM 10527 / NCIMB 13988 / SH1).